We begin with the raw amino-acid sequence, 259 residues long: Leucine-rich repeat-containing protein 3B (259 aa).

The signal sequence occupies residues M1 to M33. Residues C34–P64 enclose the LRRNT domain. N47 carries N-linked (GlcNAc...) asparagine glycosylation. LRR repeat units lie at residues E65 to D86, Q89 to G110, and T114 to N135. N-linked (GlcNAc...) asparagine glycosylation occurs at N94. Residues N145–L197 form the LRRCT domain. A helical transmembrane segment spans residues A205–V225.

This sequence belongs to the LRRC3 family.

Its subcellular location is the membrane. This Bos taurus (Bovine) protein is Leucine-rich repeat-containing protein 3B (LRRC3B).